The sequence spans 181 residues: Adenine phosphoribosyltransferase (181 aa).

Belongs to the purine/pyrimidine phosphoribosyltransferase family. In terms of assembly, homodimer.

It is found in the cytoplasm. It catalyses the reaction AMP + diphosphate = 5-phospho-alpha-D-ribose 1-diphosphate + adenine. It functions in the pathway purine metabolism; AMP biosynthesis via salvage pathway; AMP from adenine: step 1/1. Functionally, catalyzes a salvage reaction resulting in the formation of AMP, that is energically less costly than de novo synthesis. In Chelativorans sp. (strain BNC1), this protein is Adenine phosphoribosyltransferase.